A 239-amino-acid polypeptide reads, in one-letter code: Probable transcriptional regulatory protein LMOf2365_0385 (239 aa).

Belongs to the TACO1 family. YeeN subfamily.

The protein resides in the cytoplasm. The protein is Probable transcriptional regulatory protein LMOf2365_0385 of Listeria monocytogenes serotype 4b (strain F2365).